The chain runs to 158 residues: Cytosine deaminase (158 aa).

A CMP/dCMP-type deaminase domain is found at 9 to 129 (KWDQKGMDIA…KYLQTRGHEV (121 aa)). Asn-51 lines the substrate pocket. Position 62 (His-62) interacts with Zn(2+). The active-site Proton donor is the Glu-64. Zn(2+)-binding residues include Cys-91 and Cys-94. A substrate-binding site is contributed by Asp-155.

Belongs to the cytidine and deoxycytidylate deaminase family. In terms of assembly, homodimer. Zn(2+) is required as a cofactor.

The protein resides in the cytoplasm. Its subcellular location is the nucleus. The catalysed reaction is cytosine + H2O + H(+) = uracil + NH4(+). It functions in the pathway pyrimidine metabolism; UMP biosynthesis via salvage pathway; uracil from cytosine: step 1/1. Functionally, catalyzes the hydrolytic deamination of cytosine to uracil or 5-methylcytosine to thymine. Is involved in the pyrimidine salvage pathway, which allows the cell to utilize cytosine for pyrimidine nucleotide synthesis. The polypeptide is Cytosine deaminase (Saccharomyces cerevisiae (strain ATCC 204508 / S288c) (Baker's yeast)).